Reading from the N-terminus, the 343-residue chain is Heme A synthase (343 aa).

8 consecutive transmembrane segments (helical) span residues Val-13–Ala-33, His-96–Ile-116, Val-130–Leu-150, Leu-165–Gly-185, Gly-197–Ala-217, Leu-258–Ala-278, Leu-290–Leu-310, and Met-311–Ala-331. His-260 lines the heme pocket. Heme is bound at residue His-322.

It belongs to the COX15/CtaA family. Type 2 subfamily. As to quaternary structure, interacts with CtaB. Requires heme b as cofactor.

It is found in the cell membrane. It carries out the reaction Fe(II)-heme o + 2 A + H2O = Fe(II)-heme a + 2 AH2. Its pathway is porphyrin-containing compound metabolism; heme A biosynthesis; heme A from heme O: step 1/1. In terms of biological role, catalyzes the conversion of heme O to heme A by two successive hydroxylations of the methyl group at C8. The first hydroxylation forms heme I, the second hydroxylation results in an unstable dihydroxymethyl group, which spontaneously dehydrates, resulting in the formyl group of heme A. In Caulobacter sp. (strain K31), this protein is Heme A synthase.